The chain runs to 707 residues: UvrABC system protein C (707 aa).

The region spanning 14–94 (AEPGCYLMKD…IKKHRPRFNV (81 aa)) is the GIY-YIG domain. In terms of domain architecture, UVR spans 206–241 (GELVERLRGRMAGAAEGLRFEEAARLRDQLQAVERS). Residues 654–684 (PDAPPAAADEPSGAPEGTPAGGPAEAIPDAA) are disordered. Over residues 658–684 (PAAADEPSGAPEGTPAGGPAEAIPDAA) the composition is skewed to low complexity.

Belongs to the UvrC family. As to quaternary structure, interacts with UvrB in an incision complex.

The protein resides in the cytoplasm. In terms of biological role, the UvrABC repair system catalyzes the recognition and processing of DNA lesions. UvrC both incises the 5' and 3' sides of the lesion. The N-terminal half is responsible for the 3' incision and the C-terminal half is responsible for the 5' incision. In Anaeromyxobacter dehalogenans (strain 2CP-C), this protein is UvrABC system protein C.